The sequence spans 446 residues: MTEQKRKLEKLTGVKGMNDILPQDAGLWEFFEATVKSLLRAYGYQNIRTPIVEHTPLFTRGIGEVTDIVEKEMYSFVDALNGENLTLRPENTAAVVRAAIEHNMLYDGPKRLWYIGPMFRHERPQRGRYRQFHQVGVEALGFAGPDADAEIVMMCQRLWEDLGLTGIKLEINSLGLAEERAAHRVELIKYLEQHADKLDDDAQRRLYTNPLRVLDTKNPALQEIVRNAPKLIDFLGDVSRAHFEGLQRLLKANNVPFTINPRLVRGLDYYNLTVFEWVTDKLGAQGTVAAGGRYDPLIEQLGGKPTAACGWAMGIERILELLKEEHLVPEQEGVDVYVVHQGDAAREQAFIVAERLRDTGLDVILHCSADGAGASFKSQMKRADASGAAFAVIFGEDEVTNGTASVKPLRGTGDDGEKSVQQSVPVESLTEFLINAMVATAEDGDD.

A disordered region spans residues 403–422 (TASVKPLRGTGDDGEKSVQQ).

Belongs to the class-II aminoacyl-tRNA synthetase family. Homodimer.

It localises to the cytoplasm. The enzyme catalyses tRNA(His) + L-histidine + ATP = L-histidyl-tRNA(His) + AMP + diphosphate + H(+). The protein is Histidine--tRNA ligase of Burkholderia thailandensis (strain ATCC 700388 / DSM 13276 / CCUG 48851 / CIP 106301 / E264).